Consider the following 268-residue polypeptide: tRNA pseudouridine synthase A (268 aa).

Asp52 acts as the Nucleophile in catalysis. Tyr110 contributes to the substrate binding site.

This sequence belongs to the tRNA pseudouridine synthase TruA family. As to quaternary structure, homodimer.

The catalysed reaction is uridine(38/39/40) in tRNA = pseudouridine(38/39/40) in tRNA. Functionally, formation of pseudouridine at positions 38, 39 and 40 in the anticodon stem and loop of transfer RNAs. This chain is tRNA pseudouridine synthase A, found in Prochlorococcus marinus (strain MIT 9312).